The primary structure comprises 432 residues: Teosinte glume architecture 1 (432 aa).

2 disordered regions span residues histidine 20–alanine 55 and glutamate 68–cysteine 102. Residues alanine 22–threonine 41 show a composition bias toward low complexity. The SBP-type zinc finger occupies cysteine 102–proline 179. Zn(2+)-binding residues include cysteine 105, cysteine 110, cysteine 127, histidine 130, cysteine 146, cysteine 149, histidine 153, and cysteine 165. Positions glycine 409–aspartate 420 are enriched in gly residues. A disordered region spans residues glycine 409 to glutamine 432.

In terms of assembly, monomer and homodimer. In terms of tissue distribution, strongly expressed in immature ears and weakly in husks. Found in the inflorescence meristem of the developing ear, in the spikelet pair primordia, the glume primordia, the cupule forming region and other floral organs. Not detected in other tissues.

SBP transcriptional regulator probably involved in the domestication of maize. Acts as a transcriptional repressor binding to a 5'-GTAC-3' motif. May repress the growth of lateral branches in length and numbers. In Zea mays (Maize), this protein is Teosinte glume architecture 1.